The primary structure comprises 204 residues: Large ribosomal subunit protein uL4 (204 aa).

The disordered stretch occupies residues 52–76 (AEVRGGGKKPWAQKGGGRARAGSRR).

It belongs to the universal ribosomal protein uL4 family. Part of the 50S ribosomal subunit.

Its function is as follows. One of the primary rRNA binding proteins, this protein initially binds near the 5'-end of the 23S rRNA. It is important during the early stages of 50S assembly. It makes multiple contacts with different domains of the 23S rRNA in the assembled 50S subunit and ribosome. Functionally, forms part of the polypeptide exit tunnel. This chain is Large ribosomal subunit protein uL4, found in Sulfurimonas denitrificans (strain ATCC 33889 / DSM 1251) (Thiomicrospira denitrificans (strain ATCC 33889 / DSM 1251)).